The chain runs to 190 residues: Threonylcarbamoyl-AMP synthase (190 aa).

Residues 7-190 enclose the YrdC-like domain; it reads TGSIAAAVDL…ALTGELFRQG (184 aa).

Belongs to the SUA5 family. TsaC subfamily.

It localises to the cytoplasm. It carries out the reaction L-threonine + hydrogencarbonate + ATP = L-threonylcarbamoyladenylate + diphosphate + H2O. Functionally, required for the formation of a threonylcarbamoyl group on adenosine at position 37 (t(6)A37) in tRNAs that read codons beginning with adenine. Catalyzes the conversion of L-threonine, HCO(3)(-)/CO(2) and ATP to give threonylcarbamoyl-AMP (TC-AMP) as the acyladenylate intermediate, with the release of diphosphate. The sequence is that of Threonylcarbamoyl-AMP synthase from Salmonella arizonae (strain ATCC BAA-731 / CDC346-86 / RSK2980).